Consider the following 262-residue polypeptide: Acyl-[acyl-carrier-protein]--UDP-N-acetylglucosamine O-acyltransferase (262 aa).

Belongs to the transferase hexapeptide repeat family. LpxA subfamily. As to quaternary structure, homotrimer.

The protein resides in the cytoplasm. It catalyses the reaction a (3R)-hydroxyacyl-[ACP] + UDP-N-acetyl-alpha-D-glucosamine = a UDP-3-O-[(3R)-3-hydroxyacyl]-N-acetyl-alpha-D-glucosamine + holo-[ACP]. The protein operates within glycolipid biosynthesis; lipid IV(A) biosynthesis; lipid IV(A) from (3R)-3-hydroxytetradecanoyl-[acyl-carrier-protein] and UDP-N-acetyl-alpha-D-glucosamine: step 1/6. Involved in the biosynthesis of lipid A, a phosphorylated glycolipid that anchors the lipopolysaccharide to the outer membrane of the cell. The chain is Acyl-[acyl-carrier-protein]--UDP-N-acetylglucosamine O-acyltransferase from Campylobacter concisus (strain 13826).